A 263-amino-acid chain; its full sequence is Benzil reductase ((S)-benzoin forming) IRC24 (263 aa).

The NADP(+) site is built by isoleucine 7 and asparagine 86. Serine 143 functions as the Proton donor in the catalytic mechanism. The NADP(+) site is built by tyrosine 157, lysine 161, valine 190, and threonine 192. Catalysis depends on tyrosine 157, which acts as the Proton acceptor. Lysine 161 functions as the Lowers pKa of active site Tyr in the catalytic mechanism.

Belongs to the short-chain dehydrogenases/reductases (SDR) family.

The enzyme catalyses (S)-benzoin + NADP(+) = benzil + NADPH + H(+). It catalyses the reaction 2-hydroxy-1-phenyl-1-propanone + NADP(+) = 1-phenyl-1,2-propanedione + NADPH + H(+). Functionally, reduces benzil stereospecifically to (S)-benzoin. Also reduces 1-phenyl-1,2-propanedione to 2-hydroxy-1-phenyl-1-propanone. Is probably involved in a pathway contributing to genomic integrity. In Saccharomyces cerevisiae (strain ATCC 204508 / S288c) (Baker's yeast), this protein is Benzil reductase ((S)-benzoin forming) IRC24 (IRC24).